Reading from the N-terminus, the 205-residue chain is ATP synthase subunit b 1 (205 aa).

A compositionally biased stretch (polar residues) spans 1 to 15 (MFVSTAFAQTATESQ). The tract at residues 1–26 (MFVSTAFAQTATESQPAPAAGEHGAA) is disordered. Over residues 16–26 (PAPAAGEHGAA) the composition is skewed to low complexity. The chain crosses the membrane as a helical span at residues 56-78 (SQILWLAITFGLFYLFMSRVVLP).

Belongs to the ATPase B chain family. As to quaternary structure, F-type ATPases have 2 components, F(1) - the catalytic core - and F(0) - the membrane proton channel. F(1) has five subunits: alpha(3), beta(3), gamma(1), delta(1), epsilon(1). F(0) has three main subunits: a(1), b(2) and c(10-14). The alpha and beta chains form an alternating ring which encloses part of the gamma chain. F(1) is attached to F(0) by a central stalk formed by the gamma and epsilon chains, while a peripheral stalk is formed by the delta and b chains.

It localises to the cell inner membrane. Functionally, f(1)F(0) ATP synthase produces ATP from ADP in the presence of a proton or sodium gradient. F-type ATPases consist of two structural domains, F(1) containing the extramembraneous catalytic core and F(0) containing the membrane proton channel, linked together by a central stalk and a peripheral stalk. During catalysis, ATP synthesis in the catalytic domain of F(1) is coupled via a rotary mechanism of the central stalk subunits to proton translocation. Component of the F(0) channel, it forms part of the peripheral stalk, linking F(1) to F(0). The polypeptide is ATP synthase subunit b 1 (Brucella anthropi (strain ATCC 49188 / DSM 6882 / CCUG 24695 / JCM 21032 / LMG 3331 / NBRC 15819 / NCTC 12168 / Alc 37) (Ochrobactrum anthropi)).